A 187-amino-acid chain; its full sequence is UPF0200 protein MM_1313 (187 aa).

9 to 16 is a binding site for ATP; that stretch reads GMPASGKS.

This sequence belongs to the UPF0200 family.

This Methanosarcina mazei (strain ATCC BAA-159 / DSM 3647 / Goe1 / Go1 / JCM 11833 / OCM 88) (Methanosarcina frisia) protein is UPF0200 protein MM_1313.